We begin with the raw amino-acid sequence, 162 residues long: Cytochrome c-type biogenesis protein CcmE (162 aa).

Residues 1-8 are Cytoplasmic-facing; the sequence is MNPRRKKR. Residues 9–29 form a helical; Signal-anchor for type II membrane protein membrane-spanning segment; the sequence is LTLAVALIGGVAAIASLLLYA. Topologically, residues 30–162 are periplasmic; the sequence is LNSNLNLFYT…YSQQKAPDTK (133 aa). 2 residues coordinate heme: His-131 and Tyr-135. Residues 139 to 162 form a disordered region; sequence EVAEAMGQKHEKLDYSQQKAPDTK. The segment covering 153 to 162 has biased composition (polar residues); sequence YSQQKAPDTK.

It belongs to the CcmE/CycJ family.

The protein resides in the cell inner membrane. In terms of biological role, heme chaperone required for the biogenesis of c-type cytochromes. Transiently binds heme delivered by CcmC and transfers the heme to apo-cytochromes in a process facilitated by CcmF and CcmH. This Shewanella putrefaciens (strain CN-32 / ATCC BAA-453) protein is Cytochrome c-type biogenesis protein CcmE.